A 264-amino-acid polypeptide reads, in one-letter code: Claudin-18 (264 aa).

Topologically, residues 1-6 (MATTTC) are cytoplasmic. A helical membrane pass occupies residues 7–27 (QVVGLLLSLLGLAGCIAATGM). Residues 28–80 (DMWSTQDLYDNPVTAVFQYEGLWRSCVQQSSGFTECRPYFTILGLPAMLQAVR) are Extracellular-facing. Residues 81-101 (ALMIVGIVLGVIGILVSIFAL) traverse the membrane as a helical segment. Residues 102–122 (KCIRIGSMDDSAKAKMTLTSG) lie on the Cytoplasmic side of the membrane. The chain crosses the membrane as a helical span at residues 123 to 143 (ILFIISGICAIIGVSVFANML). Topologically, residues 144-176 (VTNFWMSTANMYSGMGGMGGMVQTVQTRYTFGA) are extracellular. Residues 177 to 197 (ALFVGWVAGGLTLIGGVMMCI) traverse the membrane as a helical segment. The Cytoplasmic portion of the chain corresponds to 198–264 (ACRGLTPDDS…QSHPTKYDYV (67 aa)). Positions 198-264 (ACRGLTPDDS…QSHPTKYDYV (67 aa)) are required for role in regulation of RANKL-induced osteoclast differentiation. Residue S217 is modified to Phosphoserine. Positions 241–264 (KKIYDGGARTEDDEQSHPTKYDYV) are disordered. The span at 242–264 (KIYDGGARTEDDEQSHPTKYDYV) shows a compositional bias: basic and acidic residues.

Belongs to the claudin family. Interacts with TJP2/ZO-2. Interacts with TJP1/ZO-1. Interacts with YAP1 (phosphorylated); the interaction sequesters YAP1 away from the nucleus and thereby restricts transcription of YAP1 target genes. As to quaternary structure, interacts with CLDN19. As to expression, expressed in the lung (at protein level). In terms of tissue distribution, expressed in lung. Expressed in the stomach. Expressed in lung. As to expression, expressed in stomach. Expressed in bone. In terms of tissue distribution, expressed in stomach.

It is found in the cell junction. Its subcellular location is the tight junction. The protein resides in the cell membrane. It localises to the lateral cell membrane. In terms of biological role, involved in alveolar fluid homeostasis via regulation of alveolar epithelial tight junction composition and therefore ion transport and solute permeability, potentially via downstream regulation of the actin cytoskeleton organization and beta-2-adrenergic signaling. Required for lung alveolarization and maintenance of the paracellular alveolar epithelial barrier. Acts to maintain epithelial progenitor cell proliferation and organ size, via regulation of YAP1 localization away from the nucleus and thereby restriction of YAP1 target gene transcription. Acts as a negative regulator of RANKL-induced osteoclast differentiation, potentially via relocation of TJP2/ZO-2 away from the nucleus, subsequently involved in bone resorption in response to calcium deficiency. Mediates the osteoprotective effects of estrogen, potentially via acting downstream of estrogen signaling independently of RANKL signaling pathways. Its function is as follows. Involved in the maintenance of homeostasis of the alveolar microenvironment via regulation of pH and subsequent T-cell activation in the alveolar space, is therefore indirectly involved in limiting C.neoformans infection. Required for the formation of the gastric paracellular barrier via its role in tight junction formation, thereby involved in the response to gastric acidification. The sequence is that of Claudin-18 (Cldn18) from Mus musculus (Mouse).